The sequence spans 290 residues: Short-chain dehydrogenase srdE (290 aa).

Residues Ile11, Thr37, Asp58, and Asn86 each contribute to the NADP(+) site. Residues 125 to 145 form a helical membrane-spanning segment; that stretch reads LIASSGIIVNIGSIGGVVPFV. Tyr150 contributes to the NADP(+) binding site. Tyr150 acts as the Proton donor in catalysis. Asn151 is a glycosylation site (N-linked (GlcNAc...) asparagine). NADP(+)-binding residues include Lys154, Val183, and Thr185. Lys154 functions as the Lowers pKa of active site Tyr in the catalytic mechanism.

This sequence belongs to the short-chain dehydrogenases/reductases (SDR) family.

It localises to the membrane. Short-chain dehydrogenase; part of the gene cluster that mediates the biosynthesis of sordarial, a salicylic aldehyde structurally related to the phytotoxin pyriculol. The most interesting aspect of this pathway is formation of an aromatic product from the highly reducing polyketide synthase srdA. SrdA synthesizes a reduced polyketide chain from one molecule of acetyl-CoA and five molecules of malonyl-CoA. The polyketide chain is then reductively released as an aldehyde. The oxidoreductases srdC, srdD and srdE then oxidize one of the hydroxy groups to facilitate the intramolecular aldol condensation, followed by dehydration to yield a salicylic aldehyde. This aldehyde can undergo facile reduction by endogenous reductases to yield the alcohol 1-hydroxy-2-hydroxymethyl-3-pent-1,3-dienylbenzene. The flavin-dependent srdI counteract against the propensity of the aldehydes to be reduced under physiological conditions and is responsible for reoxidizing 1-hydroxy-2-hydroxymethyl-3-pent-1,3-dienylbenzene back to the salicylic aldehyde. This salicylic aldehyde is then selectively epoxidized by the cupin-domain-containing oxidoreductase srdB to yield the epoxide, which can be hydrolyzed stereoselectively by the hydrolase srdG to give the final product sordarial. The polypeptide is Short-chain dehydrogenase srdE (Neurospora crassa (strain ATCC 24698 / 74-OR23-1A / CBS 708.71 / DSM 1257 / FGSC 987)).